A 263-amino-acid polypeptide reads, in one-letter code: Regulatory protein RecX (263 aa).

This sequence belongs to the RecX family.

The protein resides in the cytoplasm. Its function is as follows. Modulates RecA activity. In Bacillus velezensis (strain DSM 23117 / BGSC 10A6 / LMG 26770 / FZB42) (Bacillus amyloliquefaciens subsp. plantarum), this protein is Regulatory protein RecX.